We begin with the raw amino-acid sequence, 414 residues long: MALISLAIDYKKSPIEVRSEFALSGLDVSMLYKSILAIDNVVHAVILSTCNRTEVYLEITDLRVVDDILAWWQSYVRNPEFKIRDYFKLRQGTEVIMHLMKLACGLESMVLGEPQILGQVKDSYTLSKKNHAIGKELDRVFQKVFATAKKVRSETRIGHCPVSVAFSAITLAKKQLDNISTKNVLIIGAGQTGELLFRHVTALNPKHIMLANRTIEKAEKITSTFNNASAYYLSDLPKLIKKADIIIAAVNVTEYIVKCEDVGEKSRVFIDISIPQALDPKLGDLEQNAYYCVDDINTVIEGNKDKRKHESSRAQKIIVKSLEDYLEKEKAIISNSAIKELFQKADGLVDLSLEKSLAKIRNGKDPEEVLKRFAYEIKKKVLHYPVVGMKEASKQGRSDCLVCMKRMFGLNVEK.

Substrate is bound by residues 49–52, Ser108, 113–115, and Gln119; these read TCNR and EPQ. Cys50 acts as the Nucleophile in catalysis. An NADP(+)-binding site is contributed by 188–193; it reads GAGQTG.

The protein belongs to the glutamyl-tRNA reductase family. Homodimer.

It carries out the reaction (S)-4-amino-5-oxopentanoate + tRNA(Glu) + NADP(+) = L-glutamyl-tRNA(Glu) + NADPH + H(+). Its pathway is porphyrin-containing compound metabolism; protoporphyrin-IX biosynthesis; 5-aminolevulinate from L-glutamyl-tRNA(Glu): step 1/2. In terms of biological role, catalyzes the NADPH-dependent reduction of glutamyl-tRNA(Glu) to glutamate 1-semialdehyde (GSA). The protein is Glutamyl-tRNA reductase of Francisella philomiragia subsp. philomiragia (strain ATCC 25017 / CCUG 19701 / FSC 153 / O#319-036).